A 327-amino-acid chain; its full sequence is Serine/threonine-protein phosphatase PP1-beta catalytic subunit (327 aa).

Position 2 is an N-acetylalanine (A2). Positions 63, 65, 91, and 123 each coordinate Mn(2+). The Proton donor role is filled by H124. Mn(2+) contacts are provided by H172 and H247. The segment at 305–327 is disordered; that stretch reads QYGGLNSGRPVTPPRTANPPKKR.

The protein belongs to the PPP phosphatase family. PP-1 subfamily. The cofactor is Mn(2+).

The protein resides in the cytoplasm. It is found in the nucleus. It carries out the reaction O-phospho-L-seryl-[protein] + H2O = L-seryl-[protein] + phosphate. It catalyses the reaction O-phospho-L-threonyl-[protein] + H2O = L-threonyl-[protein] + phosphate. Its function is as follows. Protein phosphatase that associates with over 200 regulatory proteins to form highly specific holoenzymes which dephosphorylate hundreds of biological targets. Protein phosphatase (PP1) is essential for cell division, it participates in the regulation of glycogen metabolism, muscle contractility and protein synthesis. Involved in regulation of ionic conductances and long-term synaptic plasticity. The protein is Serine/threonine-protein phosphatase PP1-beta catalytic subunit (ppp1cb) of Xenopus laevis (African clawed frog).